The chain runs to 404 residues: Multidrug resistance protein MdtH (404 aa).

At 1-12 the chain is on the cytoplasmic side; that stretch reads MSRVSQARNLGK. Residues 13 to 33 traverse the membrane as a helical segment; that stretch reads YFLLIDNMLVVLGFFVVFPLI. Over 34 to 98 the chain is Periplasmic; that stretch reads SIRFVDQMGW…GFATMGIAHE (65 aa). The helical transmembrane segment at 99–116 threads the bilayer; that stretch reads PWLLWFSCFLSGLGGTLF. Over 117–138 the chain is Cytoplasmic; the sequence is DPPRSALVVKLIRPEQRGRFFS. Residues 139–159 form a helical membrane-spanning segment; sequence LLMMQDSAGAVIGALLGSWLL. Residues 160–164 lie on the Periplasmic side of the membrane; sequence QYDFR. A helical membrane pass occupies residues 165–185; it reads LVCAMGAILFIVCAIFNAWLL. Topologically, residues 186–213 are cytoplasmic; it reads PAWKLSTVRTPVREGMRRVISDKRFVTY. The chain crosses the membrane as a helical span at residues 214–234; sequence VLTLAGYYMLAVQVMLMLPIM. Over 235 to 243 the chain is Periplasmic; the sequence is VNDVAGSPA. Residues 244–264 form a helical membrane-spanning segment; sequence AVKWMYAIEACLSLTLLYPIA. Residues 265 to 276 lie on the Cytoplasmic side of the membrane; that stretch reads RWSEKRFRLEHR. The chain crosses the membrane as a helical span at residues 277 to 297; sequence LMAGLLIMSLSMIPIGLAGNL. The Periplasmic segment spans residues 298 to 299; sequence QQ. A helical membrane pass occupies residues 300–320; the sequence is LFTLICAFYIGSVIAEPARET. The Cytoplasmic portion of the chain corresponds to 321 to 339; that stretch reads LSASLTDARARGSYMGFSR. The helical transmembrane segment at 340–360 threads the bilayer; the sequence is LGLAIGGAIGYIGGGWLFDMG. Residues 361–367 are Periplasmic-facing; sequence KTLAQPE. A helical membrane pass occupies residues 368 to 388; the sequence is LPWMMLGIIGFITFLALGWQF. Topologically, residues 389–404 are cytoplasmic; sequence SHKRTPRQYTGARRLI.

The protein belongs to the major facilitator superfamily. DHA1 family. MdtH (TC 2.A.1.2.21) subfamily.

Its subcellular location is the cell inner membrane. This is Multidrug resistance protein MdtH from Salmonella arizonae (strain ATCC BAA-731 / CDC346-86 / RSK2980).